A 218-amino-acid polypeptide reads, in one-letter code: MGQKINPLGFRLGATQSHLSLWFAQPKSYSMGLQEDEKIRECIKNYVQKNPRLSSGFEGIARIEIKKRIDLIQVIIYIGFPNLFIEGRTQGIKELQMSVQKRLNSVNQRLNIAIARISKPYGQPNILAEYIALQLKNRVSFRKAMKKAIELTEQADTKGIQIQIAGRIDGKEIARVEWIREGRVPLQTIRAKIDHCFHKVQTIYGVLGIKIWIFVDEE.

Residues 43–118 (IKNYVQKNPR…RLNIAIARIS (76 aa)) enclose the KH type-2 domain.

It belongs to the universal ribosomal protein uS3 family. As to quaternary structure, part of the 30S ribosomal subunit.

The protein localises to the plastid. The protein resides in the chloroplast. The sequence is that of Small ribosomal subunit protein uS3c (rps3) from Acorus calamus (Sweet flag).